The chain runs to 292 residues: NIF3-like protein 1 (292 aa).

This sequence belongs to the GTP cyclohydrolase I type 2/NIF3 family.

This chain is NIF3-like protein 1 (anon-35F/36A), found in Drosophila melanogaster (Fruit fly).